The sequence spans 105 residues: N(2)-fixation sustaining protein CowN (105 aa).

This sequence belongs to the CowN family.

Is required to sustain N(2)-dependent growth in the presence of low levels of carbon monoxide (CO). Probably acts by protecting the N(2) fixation ability of the nitrogenase complex, which is inactivated in the presence of CO. This is N(2)-fixation sustaining protein CowN from Tolumonas auensis (strain DSM 9187 / NBRC 110442 / TA 4).